The sequence spans 581 residues: Aspartate--tRNA ligase (581 aa).

Glutamate 170 is a binding site for L-aspartate. Residues 194–197 (QLFK) are aspartate. L-aspartate is bound at residue arginine 216. Residues 216 to 218 (RDE) and glutamine 225 each bind ATP. Position 439 (histidine 439) interacts with L-aspartate. Glutamate 468 provides a ligand contact to ATP. Arginine 475 lines the L-aspartate pocket. Position 520 to 523 (520 to 523 (GFDR)) interacts with ATP.

This sequence belongs to the class-II aminoacyl-tRNA synthetase family. Type 1 subfamily. In terms of assembly, homodimer.

It localises to the cytoplasm. The enzyme catalyses tRNA(Asp) + L-aspartate + ATP = L-aspartyl-tRNA(Asp) + AMP + diphosphate. Catalyzes the attachment of L-aspartate to tRNA(Asp) in a two-step reaction: L-aspartate is first activated by ATP to form Asp-AMP and then transferred to the acceptor end of tRNA(Asp). This is Aspartate--tRNA ligase from Thermosipho melanesiensis (strain DSM 12029 / CIP 104789 / BI429).